The primary structure comprises 279 residues: Tryptophan synthase alpha chain (279 aa).

Residues Glu-50 and Asp-61 each act as proton acceptor in the active site.

The protein belongs to the TrpA family. In terms of assembly, tetramer of two alpha and two beta chains.

It catalyses the reaction (1S,2R)-1-C-(indol-3-yl)glycerol 3-phosphate + L-serine = D-glyceraldehyde 3-phosphate + L-tryptophan + H2O. The protein operates within amino-acid biosynthesis; L-tryptophan biosynthesis; L-tryptophan from chorismate: step 5/5. Functionally, the alpha subunit is responsible for the aldol cleavage of indoleglycerol phosphate to indole and glyceraldehyde 3-phosphate. This chain is Tryptophan synthase alpha chain, found in Brucella melitensis biotype 1 (strain ATCC 23456 / CCUG 17765 / NCTC 10094 / 16M).